Consider the following 186-residue polypeptide: UPF0397 protein LBUL_1584 (186 aa).

Helical transmembrane passes span 13 to 33 (IAAL…ASIP), 46 to 66 (AFLA…VGFI), 79 to 99 (TWWN…LYAL), 114 to 134 (VIFN…LGSV), and 150 to 170 (QAGL…TILL).

The protein belongs to the UPF0397 family.

Its subcellular location is the cell membrane. In Lactobacillus delbrueckii subsp. bulgaricus (strain ATCC BAA-365 / Lb-18), this protein is UPF0397 protein LBUL_1584.